We begin with the raw amino-acid sequence, 149 residues long: Succinate dehydrogenase assembly factor 2, mitochondrial (149 aa).

The protein belongs to the SDHAF2 family. In terms of assembly, interacts with the flavoprotein subunit within the SDH catalytic dimer.

The protein resides in the mitochondrion matrix. Its function is as follows. Plays an essential role in the assembly of succinate dehydrogenase (SDH), an enzyme complex (also referred to as respiratory complex II) that is a component of both the tricarboxylic acid (TCA) cycle and the mitochondrial electron transport chain, and which couples the oxidation of succinate to fumarate with the reduction of ubiquinone (coenzyme Q) to ubiquinol. Required for flavinylation (covalent attachment of FAD) of the flavoprotein subunit of the SDH catalytic dimer. The polypeptide is Succinate dehydrogenase assembly factor 2, mitochondrial (Scheffersomyces stipitis (strain ATCC 58785 / CBS 6054 / NBRC 10063 / NRRL Y-11545) (Yeast)).